A 352-amino-acid polypeptide reads, in one-letter code: Holliday junction branch migration complex subunit RuvB (352 aa).

The large ATPase domain (RuvB-L) stretch occupies residues M1–Y181. ATP-binding positions include L20, R21, G62, K65, T66, T67, E128 to F130, R171, Y181, and R218. T66 lines the Mg(2+) pocket. A small ATPAse domain (RuvB-S) region spans residues E182 to E252. Positions E255–A352 are head domain (RuvB-H). R291, R310, and R315 together coordinate DNA.

It belongs to the RuvB family. In terms of assembly, homohexamer. Forms an RuvA(8)-RuvB(12)-Holliday junction (HJ) complex. HJ DNA is sandwiched between 2 RuvA tetramers; dsDNA enters through RuvA and exits via RuvB. An RuvB hexamer assembles on each DNA strand where it exits the tetramer. Each RuvB hexamer is contacted by two RuvA subunits (via domain III) on 2 adjacent RuvB subunits; this complex drives branch migration. In the full resolvosome a probable DNA-RuvA(4)-RuvB(12)-RuvC(2) complex forms which resolves the HJ.

The protein resides in the cytoplasm. The enzyme catalyses ATP + H2O = ADP + phosphate + H(+). In terms of biological role, the RuvA-RuvB-RuvC complex processes Holliday junction (HJ) DNA during genetic recombination and DNA repair, while the RuvA-RuvB complex plays an important role in the rescue of blocked DNA replication forks via replication fork reversal (RFR). RuvA specifically binds to HJ cruciform DNA, conferring on it an open structure. The RuvB hexamer acts as an ATP-dependent pump, pulling dsDNA into and through the RuvAB complex. RuvB forms 2 homohexamers on either side of HJ DNA bound by 1 or 2 RuvA tetramers; 4 subunits per hexamer contact DNA at a time. Coordinated motions by a converter formed by DNA-disengaged RuvB subunits stimulates ATP hydrolysis and nucleotide exchange. Immobilization of the converter enables RuvB to convert the ATP-contained energy into a lever motion, pulling 2 nucleotides of DNA out of the RuvA tetramer per ATP hydrolyzed, thus driving DNA branch migration. The RuvB motors rotate together with the DNA substrate, which together with the progressing nucleotide cycle form the mechanistic basis for DNA recombination by continuous HJ branch migration. Branch migration allows RuvC to scan DNA until it finds its consensus sequence, where it cleaves and resolves cruciform DNA. The polypeptide is Holliday junction branch migration complex subunit RuvB (Parvibaculum lavamentivorans (strain DS-1 / DSM 13023 / NCIMB 13966)).